The sequence spans 630 residues: Chaperone protein HtpG (630 aa).

The tract at residues M1–R341 is a; substrate-binding. A b region spans residues E342–R558. Residues M559–V630 are c.

The protein belongs to the heat shock protein 90 family. As to quaternary structure, homodimer.

The protein resides in the cytoplasm. Its function is as follows. Molecular chaperone. Has ATPase activity. In Bordetella avium (strain 197N), this protein is Chaperone protein HtpG.